Consider the following 437-residue polypeptide: MSMFLDTAKISVQAGRGGDGMVAFRREKYVPNGGPWGGDGGKGGSVIFRVDEGLRTLMDFRYNRKFKAKSGEKGMTKGMHGRGAEDLIVFVPQGTTVRDAETGKVITDLVEHGQEVVIAKGGRGGRGNIRFATPRNPAPEIAENGEPGEERQLELELKILADVGLVGFPSVGKSTLLSVVSSAKPKIGAYHFTTIVPNLGMVRTKSGDSFAMADLPGLIEGASQGVGLGTQFLRHIERTRVILHVIDMSASEGRDPYEDYVSINNELETYNLRLMERPQIIVANKMDMPEAQDNLKAFKKKLATQYDEFNDLPMIFSISSLAHQGLENLLEATAELLAKTDEFLLYDESDLVDEEAYYGFAEAEKEFEITRDDDATWVLSGEKLERLFVMTNMERDESIMKFARQLRGMGVDEALRERGAKDGDLVRIGKFEFEFVD.

The Obg domain occupies serine 2 to leucine 160. The OBG-type G domain maps to alanine 161 to alanine 338. Residues glycine 167–serine 174, phenylalanine 192–valine 196, aspartate 214–glycine 217, asparagine 284–aspartate 287, and serine 319–leucine 321 each bind GTP. Mg(2+) contacts are provided by serine 174 and threonine 194. The OCT domain maps to glycine 359 to aspartate 437.

It belongs to the TRAFAC class OBG-HflX-like GTPase superfamily. OBG GTPase family. Monomer. It depends on Mg(2+) as a cofactor.

The protein resides in the cytoplasm. Functionally, an essential GTPase which binds GTP, GDP and possibly (p)ppGpp with moderate affinity, with high nucleotide exchange rates and a fairly low GTP hydrolysis rate. Plays a role in control of the cell cycle, stress response, ribosome biogenesis and in those bacteria that undergo differentiation, in morphogenesis control. The polypeptide is GTPase Obg (Streptococcus pyogenes serotype M3 (strain ATCC BAA-595 / MGAS315)).